Here is a 144-residue protein sequence, read N- to C-terminus: Large ribosomal subunit protein uL13 (144 aa).

Belongs to the universal ribosomal protein uL13 family. Part of the 50S ribosomal subunit.

Functionally, this protein is one of the early assembly proteins of the 50S ribosomal subunit, although it is not seen to bind rRNA by itself. It is important during the early stages of 50S assembly. The sequence is that of Large ribosomal subunit protein uL13 from Pelotomaculum thermopropionicum (strain DSM 13744 / JCM 10971 / SI).